The sequence spans 320 residues: Lipoyl synthase (320 aa).

[4Fe-4S] cluster contacts are provided by Cys67, Cys72, Cys78, Cys93, Cys97, Cys100, and Ser307. Residues 79-296 (FNHGTATFMI…RDKANEMGFE (218 aa)) enclose the Radical SAM core domain.

The protein belongs to the radical SAM superfamily. Lipoyl synthase family. [4Fe-4S] cluster is required as a cofactor.

The protein resides in the cytoplasm. It catalyses the reaction [[Fe-S] cluster scaffold protein carrying a second [4Fe-4S](2+) cluster] + N(6)-octanoyl-L-lysyl-[protein] + 2 oxidized [2Fe-2S]-[ferredoxin] + 2 S-adenosyl-L-methionine + 4 H(+) = [[Fe-S] cluster scaffold protein] + N(6)-[(R)-dihydrolipoyl]-L-lysyl-[protein] + 4 Fe(3+) + 2 hydrogen sulfide + 2 5'-deoxyadenosine + 2 L-methionine + 2 reduced [2Fe-2S]-[ferredoxin]. Its pathway is protein modification; protein lipoylation via endogenous pathway; protein N(6)-(lipoyl)lysine from octanoyl-[acyl-carrier-protein]: step 2/2. Catalyzes the radical-mediated insertion of two sulfur atoms into the C-6 and C-8 positions of the octanoyl moiety bound to the lipoyl domains of lipoate-dependent enzymes, thereby converting the octanoylated domains into lipoylated derivatives. The chain is Lipoyl synthase from Haemophilus influenzae (strain PittGG).